Consider the following 441-residue polypeptide: GTPase Der (441 aa).

EngA-type G domains follow at residues 4-169 (SIVA…PPEA) and 178-353 (PRIA…QNRN). Residues 10 to 17 (GRPNVGKS), 57 to 61 (DTGGI), 120 to 123 (NKVD), 184 to 191 (GKPNVGKS), 231 to 235 (DTAGL), and 296 to 299 (NKWD) each bind GTP. In terms of domain architecture, KH-like spans 354 to 438 (LRISTGVLNE…SLKFFIRERK (85 aa)).

It belongs to the TRAFAC class TrmE-Era-EngA-EngB-Septin-like GTPase superfamily. EngA (Der) GTPase family. Associates with the 50S ribosomal subunit.

Its function is as follows. GTPase that plays an essential role in the late steps of ribosome biogenesis. The protein is GTPase Der of Lachnoclostridium phytofermentans (strain ATCC 700394 / DSM 18823 / ISDg) (Clostridium phytofermentans).